Reading from the N-terminus, the 217-residue chain is Large ribosomal subunit protein uL16 (217 aa).

The protein belongs to the universal ribosomal protein uL16 family. In terms of assembly, component of the small ribosomal subunit. Mature ribosomes consist of a small (40S) and a large (60S) subunit. The 40S subunit contains about 33 different proteins and 1 molecule of RNA (18S). The 60S subunit contains about 49 different proteins and 3 molecules of RNA (25S, 5.8S and 5S).

The sequence is that of Large ribosomal subunit protein uL16 (rpl10) from Dictyostelium discoideum (Social amoeba).